Here is a 437-residue protein sequence, read N- to C-terminus: Cytochrome b (437 aa).

A helical transmembrane segment spans residues 45–65 (WIWGIVLAFTLVLQIVTGIVL). Residues histidine 97 and histidine 111 each coordinate heme b. Helical transmembrane passes span 100 to 120 (GASL…YYGS), 129 to 149 (WIVG…GYVL), 156 to 176 (FWGA…GPSI), 194 to 214 (FFSL…IHIW), 248 to 268 (FVIK…AVVA), 298 to 318 (FLPF…VILV), 330 to 350 (FFGV…PWLD), 365 to 385 (MWFW…AMPT), and 391 to 411 (WISL…LPLL). Heme b is bound by residues histidine 198 and histidine 212.

Belongs to the cytochrome b family. The main subunits of complex b-c1 are: cytochrome b, cytochrome c1 and the Rieske protein. Requires heme b as cofactor.

The protein resides in the cell membrane. Functionally, component of the ubiquinol-cytochrome c reductase complex (complex III or cytochrome b-c1 complex), which is a respiratory chain that generates an electrochemical potential coupled to ATP synthesis. This Rhodobacter capsulatus (strain ATCC BAA-309 / NBRC 16581 / SB1003) protein is Cytochrome b (petB).